The primary structure comprises 122 residues: Large ribosomal subunit protein uL14 (122 aa).

It belongs to the universal ribosomal protein uL14 family. Part of the 50S ribosomal subunit. Forms a cluster with proteins L3 and L19. In the 70S ribosome, L14 and L19 interact and together make contacts with the 16S rRNA in bridges B5 and B8.

Binds to 23S rRNA. Forms part of two intersubunit bridges in the 70S ribosome. The protein is Large ribosomal subunit protein uL14 of Rickettsia typhi (strain ATCC VR-144 / Wilmington).